Consider the following 351-residue polypeptide: Delta(7)-sterol 5(6)-desaturase (351 aa).

3 helical membrane passes run 88–108, 136–156, and 173–193; these read LSLF…VASF, GLGA…LELH, and VRLA…IYLL. Residues 180-305 form the Fatty acid hydroxylase domain; that stretch reads LFFILFTDFG…FTTLWDRLGG (126 aa). The Histidine box-1 motif lies at 194-198; it reads HRWLH. The Histidine box-2 signature appears at 207 to 211; sequence HKKHH. The helical transmembrane segment at 237-257 threads the bilayer; it reads HLFPMLFPLHKVSYLVLFTFV. The Histidine box-3 motif lies at 282–286; sequence HTVHH.

It belongs to the sterol desaturase family. It depends on Fe cation as a cofactor.

The protein localises to the endoplasmic reticulum membrane. The enzyme catalyses a Delta(7)-sterol + 2 Fe(II)-[cytochrome b5] + O2 + 2 H(+) = a Delta(5),Delta(7)-sterol + 2 Fe(III)-[cytochrome b5] + 2 H2O. It functions in the pathway steroid metabolism; ergosterol biosynthesis; ergosterol from zymosterol: step 3/5. Its function is as follows. Catalyzes the introduction of a C-5 double bond in the B ring of ergosterol. May contribute to the regulation of ergosterol biosynthesis. The sequence is that of Delta(7)-sterol 5(6)-desaturase (ERG3) from Eremothecium gossypii (strain ATCC 10895 / CBS 109.51 / FGSC 9923 / NRRL Y-1056) (Yeast).